Consider the following 201-residue polypeptide: Dephospho-CoA kinase (201 aa).

Residues 4–201 enclose the DPCK domain; it reads SVGLTGNIAS…KYLREAKIKQ (198 aa). Residue 12 to 17 coordinates ATP; it reads ASGKST.

The protein belongs to the CoaE family.

The protein localises to the cytoplasm. The catalysed reaction is 3'-dephospho-CoA + ATP = ADP + CoA + H(+). It participates in cofactor biosynthesis; coenzyme A biosynthesis; CoA from (R)-pantothenate: step 5/5. Functionally, catalyzes the phosphorylation of the 3'-hydroxyl group of dephosphocoenzyme A to form coenzyme A. The sequence is that of Dephospho-CoA kinase from Legionella pneumophila subsp. pneumophila (strain Philadelphia 1 / ATCC 33152 / DSM 7513).